Reading from the N-terminus, the 436-residue chain is GTPase Der (436 aa).

EngA-type G domains are found at residues 3–168 (PLIA…PESD) and 177–352 (IRLA…DNRA). GTP is bound by residues 9–16 (GRPNVGKS), 56–60 (DTGGY), 120–123 (NKVE), 183–190 (GRPNVGKS), 230–234 (DTAGL), and 295–298 (NKWD). A KH-like domain is found at 353-436 (RKISTSALNR…VTISLRFLQK (84 aa)).

It belongs to the TRAFAC class TrmE-Era-EngA-EngB-Septin-like GTPase superfamily. EngA (Der) GTPase family. In terms of assembly, associates with the 50S ribosomal subunit.

Its function is as follows. GTPase that plays an essential role in the late steps of ribosome biogenesis. In Chlorobium phaeovibrioides (strain DSM 265 / 1930) (Prosthecochloris vibrioformis (strain DSM 265)), this protein is GTPase Der.